A 97-amino-acid chain; its full sequence is Co-chaperonin GroES (97 aa).

It belongs to the GroES chaperonin family. Heptamer of 7 subunits arranged in a ring. Interacts with the chaperonin GroEL.

It is found in the cytoplasm. Together with the chaperonin GroEL, plays an essential role in assisting protein folding. The GroEL-GroES system forms a nano-cage that allows encapsulation of the non-native substrate proteins and provides a physical environment optimized to promote and accelerate protein folding. GroES binds to the apical surface of the GroEL ring, thereby capping the opening of the GroEL channel. This Buchnera aphidicola subsp. Tuberolachnus salignus protein is Co-chaperonin GroES.